The primary structure comprises 101 residues: MKILVKIRLTRVGTHKKPFFRIVVMDAKTKANGAYIENLGHYDPVLGQVVLKKEAILAQLQNGAQPSETVKNILSQEGIWKEFIALKDANKKRKAALSKAK.

Belongs to the bacterial ribosomal protein bS16 family.

In Ureaplasma parvum serovar 3 (strain ATCC 700970), this protein is Small ribosomal subunit protein bS16.